Reading from the N-terminus, the 64-residue chain is Bowman-Birk type trypsin inhibitor TI1 (64 aa).

Cystine bridges form between cysteine 9–cysteine 61, cysteine 10–cysteine 25, cysteine 15–cysteine 23, cysteine 32–cysteine 39, and cysteine 36–cysteine 49.

The protein belongs to the Bowman-Birk serine protease inhibitor family.

This is Bowman-Birk type trypsin inhibitor TI1 from Coix lacryma-jobi (Job's tears).